Here is a 713-residue protein sequence, read N- to C-terminus: MKRFMKLTAVWTLWLSLTLGLLSPVHAAPDTSVSNKQNFSTDVIYQIFTDRFSDGNPANNPTGAAFDGSCTNLRLYCGGDWQGIINKINDGYLTGMGITAIWISQPVENIYSVINYSGVNNTAYHGYWARDFKKTNPAYGTMQDFKNLIDTAHAHNIKVIIDFAPNHTSPASSDDPSFAENGRLYDNGNLLGGYTNDTQNLFHHYGGTDFSTIENGIYKNLYDLADLNHNNSSVDVYLKDAIKMWLDLGVDGIRVDAVKHMPFGWQKSFMATINNYKPVFTFGEWFLGVNEISPEYHQFANESGMSLLDFRFAQKARQVFRDNTDNMYGLKAMLEGSEVDYAQVNDQVTFIDNHDMERFHTSNGDRRKLEQALAFTLTSRGVPAIYYGSEQYMSGGNDPDNRARLPSFSTTTTAYQVIQKLAPLRKSNPAIAYGSTHERWINNDVIIYERKFGNNVAVVAINRNMNTPASITGLVTSLRRASYNDVLGGILNGNTLTVGAGGAASNFTLAPGGTAVWQYTTDATTPIIGNVGPMMAKPGVTITIDGRGFGSGKGTVYFGTTAVTGADIVAWEDTQIQVKIPAVPGGIYDIRVANAAGAASNIYDNFEVLTGDQVTVRFVINNATTALGQNVFLTGNVSELGNWDPNNAIGPMYNQVVYQYPTWYYDVSVPAGQTIEFKFLKKQGSTVTWEGGANRTFTTPTSGTATVNVNWQP.

The first 27 residues, 1-27, serve as a signal peptide directing secretion; that stretch reads MKRFMKLTAVWTLWLSLTLGLLSPVHA. The tract at residues 28–165 is A1; that stretch reads APDTSVSNKQ…NIKVIIDFAP (138 aa). The Ca(2+) site is built by D54, N56, N59, and N60. The cysteines at positions 70 and 77 are disulfide-linked. Ca(2+) contacts are provided by G78 and D80. Position 127–128 (127–128) interacts with substrate; sequence YW. N166 serves as a coordination point for Ca(2+). The tract at residues 166-229 is b; that stretch reads NHTSPASSDD…NLYDLADLNH (64 aa). H167 serves as a coordination point for substrate. I217 contributes to the Ca(2+) binding site. 220 to 223 contributes to the substrate binding site; sequence NLYD. Position 226 (D226) interacts with Ca(2+). Residues 230-433 form an A2 region; it reads NNSSVDVYLK…LRKSNPAIAY (204 aa). R254 is a binding site for substrate. D256 acts as the Nucleophile in catalysis. Residue 259–260 coordinates substrate; it reads KH. H260 provides a ligand contact to Ca(2+). E284 serves as the catalytic Proton donor. Residues H354, D398, and R402 each coordinate substrate. The c stretch occupies residues 434 to 522; that stretch reads GSTHERWINN…GTAVWQYTTD (89 aa). The interval 523–609 is d; it reads ATTPIIGNVG…SNIYDNFEVL (87 aa). The IPT/TIG domain occupies 526 to 607; that stretch reads PIIGNVGPMM…AASNIYDNFE (82 aa). The CBM20 domain maps to 608–713; it reads VLTGDQVTVR…TATVNVNWQP (106 aa). Positions 610-713 are e; the sequence is TGDQVTVRFV…TATVNVNWQP (104 aa).

This sequence belongs to the glycosyl hydrolase 13 family. As to quaternary structure, monomer. It depends on Ca(2+) as a cofactor.

Its subcellular location is the secreted. It carries out the reaction Cyclizes part of a (1-&gt;4)-alpha-D-glucan chain by formation of a (1-&gt;4)-alpha-D-glucosidic bond.. The polypeptide is Cyclomaltodextrin glucanotransferase (cgt) (Bacillus sp. (strain 1011)).